A 75-amino-acid polypeptide reads, in one-letter code: Small ribosomal subunit protein bS18 (75 aa).

This sequence belongs to the bacterial ribosomal protein bS18 family. As to quaternary structure, part of the 30S ribosomal subunit. Forms a tight heterodimer with protein bS6.

In terms of biological role, binds as a heterodimer with protein bS6 to the central domain of the 16S rRNA, where it helps stabilize the platform of the 30S subunit. The chain is Small ribosomal subunit protein bS18 from Cereibacter sphaeroides (strain KD131 / KCTC 12085) (Rhodobacter sphaeroides).